The chain runs to 1083 residues: Solute carrier family 12 member 7 (1083 aa).

The disordered stretch occupies residues 1–52 (MPTNFTVVPVEAHADGGGDETAERTEAPGTPEGPEPERPSPGDGNPRENSPF). Residues 1 to 119 (MPTNFTVVPV…RREAKAPRMG (119 aa)) lie on the Cytoplasmic side of the membrane. Residues 12 to 26 (AHADGGGDETAERTE) show a composition bias toward basic and acidic residues. The residue at position 30 (Thr-30) is a Phosphothreonine. Ser-50 and Ser-62 each carry phosphoserine. A discontinuously helical transmembrane segment spans residues 120-142 (TFIGVYLPCLQNILGVILFLRLT). K(+) contacts are provided by Asn-131 and Ile-132. Val-135 contacts chloride. Residues 143-149 (WIVGVAG) lie on the Extracellular side of the membrane. Residues 150–172 (VLESFLIVAMCCTCTMLTAISMS) form a helical membrane-spanning segment. At 173-196 (AIATNGVVPAGGSYYMISRSLGPE) the chain is on the cytoplasmic side. A helical membrane pass occupies residues 197 to 225 (FGGAVGLCFYLGTTFAGAMYILGTIEIFL). Residues 226–249 (TYISPGAAIFQAEAAGGEAAAMLH) lie on the Extracellular side of the membrane. Transmembrane regions (helical) follow at residues 250–270 (NMRV…FVGV) and 272–300 (YVNK…KSAF). Residues 301–419 (DPPDIPVCLL…PYVLTDIAAS (119 aa)) lie on the Extracellular side of the membrane. 2 disulfides stabilise this stretch: Cys-308–Cys-323 and Cys-343–Cys-352. Asn-312 carries an N-linked (GlcNAc...) asparagine glycan. The N-linked (GlcNAc...) asparagine glycan is linked to Asn-360. The chain crosses the membrane as a helical span at residues 420-440 (FTLLVGIYFPSVTGIMAGSNR). K(+) is bound by residues Pro-429 and Thr-432. Pro-429 lines the chloride pocket. Residues Gly-433 and Ile-434 each contribute to the chloride site. The Cytoplasmic segment spans residues 441-450 (SGDLKDAQKS). A helical membrane pass occupies residues 451–473 (IPTGTILAIVTTSFIYLSCIVLF). At 474–504 (GACIEGVVLRDKFGEALQGNLVIGMLAWPSP) the chain is on the extracellular side. Residues 505-531 (WVIVIGSFFSTCGAGLQSLTGAPRLLQ) form a helical membrane-spanning segment. Residues 532–554 (AIARDGIVPFLQVFGHGKANGEP) are Cytoplasmic-facing. The next 2 helical transmembrane spans lie at 555–571 (TWAL…GILI) and 574–598 (LDSV…ACAV). Tyr-589 is a chloride binding site. Residues 599–612 (QTLLRTPNWRPRFK) lie on the Cytoplasmic side of the membrane. Transmembrane regions (helical) follow at residues 613-632 (FYHW…LMFI) and 636-651 (YYAL…IYKY). The Cytoplasmic portion of the chain corresponds to 652-1083 (IEYRGAEKEW…GGREVITIYS (432 aa)). The tract at residues 664–680 (GIRGLSLNAARYALLRV) is scissor helix. Phosphothreonine occurs at positions 973 and 980.

The protein belongs to the SLC12A transporter family. K/Cl co-transporter subfamily. In terms of assembly, homodimer; adopts a domain-swap conformation at the scissor helices connecting the transmembrane domain and C-terminal domain. Heterodimer with K-Cl cotransporter SLC12A5. As to expression, detected in muscle, brain, lung, heart and kidney.

It localises to the cell membrane. The enzyme catalyses K(+)(in) + chloride(in) = K(+)(out) + chloride(out). Its activity is regulated as follows. Activated by N-ethylmaleimide (NEM). Inhibited by furosemide, DIDS and bumetanide. The inhibition is much stronger in the presence of 50 mM K(+) in the uptake medium. Inhibited by DIOA. Inhibited by WNK3. Its function is as follows. Mediates electroneutral potassium-chloride cotransport when activated by cell swelling. May mediate K(+) uptake into Deiters' cells in the cochlea and contribute to K(+) recycling in the inner ear. Important for the survival of cochlear outer and inner hair cells and the maintenance of the organ of Corti. May be required for basolateral Cl(-) extrusion in the kidney and contribute to renal acidification. The polypeptide is Solute carrier family 12 member 7 (Homo sapiens (Human)).